The sequence spans 201 residues: MRAWYFDELPGHQKLPHMGEPVPNQKVYDLGVKHWKIPLDGHEETINQIAKERDYPNRDIINISKEGLGELYDEKMVYFFQEHMHEDEEIRYILDGTGYYDIRETPTDKWIRFQIEAEDLVIIPVGIYHRFTLDEGDYIKSIRLFRADPKWVYMYRSKEMDVNPYRLEYLKQTKEKLGLPVAPAAVGWGAWLWSWITWSKL.

Fe(2+)-binding residues include His-83, His-85, Glu-89, and His-129. Ni(2+) is bound by residues His-83, His-85, Glu-89, and His-129.

This sequence belongs to the acireductone dioxygenase (ARD) family. Fe(2+) serves as cofactor. It depends on Ni(2+) as a cofactor.

The protein resides in the cytoplasm. Its subcellular location is the nucleus. It catalyses the reaction 1,2-dihydroxy-5-(methylsulfanyl)pent-1-en-3-one + O2 = 4-methylsulfanyl-2-oxobutanoate + formate + 2 H(+). The catalysed reaction is 1,2-dihydroxy-5-(methylsulfanyl)pent-1-en-3-one + O2 = 3-(methylsulfanyl)propanoate + CO + formate + 2 H(+). It functions in the pathway amino-acid biosynthesis; L-methionine biosynthesis via salvage pathway; L-methionine from S-methyl-5-thio-alpha-D-ribose 1-phosphate: step 5/6. Catalyzes 2 different reactions between oxygen and the acireductone 1,2-dihydroxy-3-keto-5-methylthiopentene (DHK-MTPene) depending upon the metal bound in the active site. Fe-containing acireductone dioxygenase (Fe-ARD) produces formate and 2-keto-4-methylthiobutyrate (KMTB), the alpha-ketoacid precursor of methionine in the methionine recycle pathway. Ni-containing acireductone dioxygenase (Ni-ARD) produces methylthiopropionate, carbon monoxide and formate, and does not lie on the methionine recycle pathway. The chain is Acireductone dioxygenase 2 from Coprinopsis cinerea (strain Okayama-7 / 130 / ATCC MYA-4618 / FGSC 9003) (Inky cap fungus).